Consider the following 140-residue polypeptide: MAIERTFSIIKPDATARNLTGAVNAVIEKAGLRIVAQKRIRMTKEQAETFYAVHKARPFFGELVEFMTSGPVVVQVLEGENAVAKYRDAMGATDPSKAAEGTIRKLYAKSIGENSAHGSDAPETAAIEIAQFFSGNEIVG.

ATP is bound by residues Lys11, Phe59, Arg87, Thr93, Arg104, and Asn114. Catalysis depends on His117, which acts as the Pros-phosphohistidine intermediate.

Belongs to the NDK family. As to quaternary structure, homotetramer. Mg(2+) serves as cofactor.

It localises to the cytoplasm. It carries out the reaction a 2'-deoxyribonucleoside 5'-diphosphate + ATP = a 2'-deoxyribonucleoside 5'-triphosphate + ADP. The catalysed reaction is a ribonucleoside 5'-diphosphate + ATP = a ribonucleoside 5'-triphosphate + ADP. Its function is as follows. Major role in the synthesis of nucleoside triphosphates other than ATP. The ATP gamma phosphate is transferred to the NDP beta phosphate via a ping-pong mechanism, using a phosphorylated active-site intermediate. In Bradyrhizobium diazoefficiens (strain JCM 10833 / BCRC 13528 / IAM 13628 / NBRC 14792 / USDA 110), this protein is Nucleoside diphosphate kinase.